We begin with the raw amino-acid sequence, 173 residues long: Protein-export protein SecB (173 aa).

The segment at 148 to 173 is disordered; that stretch reads QQQKQRREQGTSDSAPSGSPDNGGRQ. The segment covering 158–167 has biased composition (polar residues); that stretch reads TSDSAPSGSP.

It belongs to the SecB family. In terms of assembly, homotetramer, a dimer of dimers. One homotetramer interacts with 1 SecA dimer.

It localises to the cytoplasm. One of the proteins required for the normal export of preproteins out of the cell cytoplasm. It is a molecular chaperone that binds to a subset of precursor proteins, maintaining them in a translocation-competent state. It also specifically binds to its receptor SecA. The chain is Protein-export protein SecB from Halorhodospira halophila (strain DSM 244 / SL1) (Ectothiorhodospira halophila (strain DSM 244 / SL1)).